Here is a 380-residue protein sequence, read N- to C-terminus: Cytochrome b (380 aa).

4 helical membrane passes run 33–53 (FGSL…FLAM), 77–98 (WLIR…YLHV), 113–133 (WNIG…GYVL), and 178–198 (FFAF…IHLL). Residues histidine 83 and histidine 97 each coordinate heme b. Heme b is bound by residues histidine 182 and histidine 196. A ubiquinone is bound at residue histidine 201. The next 4 membrane-spanning stretches (helical) occupy residues 226-246 (YKDL…ALFS), 288-308 (LGGV…PMLH), 320-340 (LSQI…WIGG), and 347-367 (FVLI…IALP).

Belongs to the cytochrome b family. As to quaternary structure, the cytochrome bc1 complex contains 3 respiratory subunits (MT-CYB, CYC1 and UQCRFS1), 2 core proteins (UQCRC1 and UQCRC2) and probably 6 low-molecular weight proteins. Heme b serves as cofactor.

The protein resides in the mitochondrion inner membrane. Its function is as follows. Component of the ubiquinol-cytochrome c reductase complex (complex III or cytochrome b-c1 complex) that is part of the mitochondrial respiratory chain. The b-c1 complex mediates electron transfer from ubiquinol to cytochrome c. Contributes to the generation of a proton gradient across the mitochondrial membrane that is then used for ATP synthesis. In Acipenser transmontanus (White sturgeon), this protein is Cytochrome b (mt-cyb).